Reading from the N-terminus, the 666-residue chain is MSSFLVQTAVVRLFLLGVVFWFPFALSSSCAEIASKFGTWKSEGDAPPSYLSPTVDLLDGLDRIRKKIINGTISSQYDFDNLLHRLISQANDGHLQIGLCSREIFRFQHGTPLTSVSREGLDLPQLYVHSDAVIMHSGQVEAISPVVEINGLEADYYLQSRIAVTLGYQDPDARYNALFPSPSAGFTGTYSAGAWASNSGEWPGSAVLTIRFANGTRLEVKPTATWPATNGPMNYTDGQALFEAACLPGTSSKYIFGSFPGMYLGLPAYELPRSGPSVFPAPTIKDSNGLVRLYSLEDAALQDVAVLQITSFRIGGEDSREFSATIRQSLDWASSHGKTKLLLDLSGNEGGNVIPGFDLFRMLFPDEPIRSETRFRSTELLDVLGQAFSAEYRGADAKEILDPPLAAQNAVSPDQEENVFGSWKDLFGPDPNYEGDSMSNAYAVFSFAAASTTFEPISGYGSAPLAIKTRLFEPQSIAVVTDGRCASTCAIVVGLLQAQGVRTVTFGGRPRKAPMQAVGGVKGGQRWSLRTISRHIKTARELLAKQYTSTAAQANSTRRLAVGHLLQKLNDLAPPALPLIPRMEDNEWEFALRFDTYGQSSVNFRDAYVPANETTPWQFIYEAADCRMFLTPENVVDPASRWNSAARAMFGGREMGSEKCVDYVSV.

The first 27 residues, 1 to 27, serve as a signal peptide directing secretion; the sequence is MSSFLVQTAVVRLFLLGVVFWFPFALS. Residues Asn-70, Asn-214, and Asn-234 are each glycosylated (N-linked (GlcNAc...) asparagine). The segment at 303–504 is peptidase S41 domain; that stretch reads DVAVLQITSF…LLQAQGVRTV (202 aa). Asn-555 and Asn-612 each carry an N-linked (GlcNAc...) asparagine glycan.

This sequence belongs to the peptidase S41A family.

It functions in the pathway mycotoxin biosynthesis. Peptidase S41 family protein; part of the gene cluster that mediates the biosynthesis of the phomopsins, a group of hexapeptide mycotoxins which infects lupins and causes lupinosis disease in livestock. Within the pathway, phomP1 and phomP1' are probably involved in the processing of the phomA and phomA' precursors. The pathway starts with the processing of the precursor phomA by several endopeptidases including kexin proteases as well as the cluster-specific S41 family peptidase phomP1 and the oligopeptidase phomG to produce 10 identical copies of the hexapeptide Tyr-Val-Ile-Pro-Ile-Asp. After being excised from the precursor peptide, the core peptides are cyclized and modified post-translationally by enzymes encoded within the gene cluster. The timing and order of proteolysis of the phomA precursor and PTMs are still unknown. Two tyrosinase-like enzymes, phomQ1 and phomQ2, catalyze the chlorination and hydroxylation of Tyr, respectively. PhomYb, is proposed to be involved in the construction of the macrocyclic structure. The other 4 ustYa family proteins may be involved in PTMs that generate the unique structure of phomopsin A. PhomYa is required for the hydroxylation of C-beta of Tyr. PhomYc, phomYd, and phomYe are responsible for the biosynthesis of 2,3-dehydroisoleucine (dIle), 2,3-dehydroaspartic acid (dAsp), and 3,4-dehydroproline (dPro), respectively. While dIle formation by phomYc is indispensable for the installation of dAsp by phomYd, the order of the other PTMs have not been elucidated yet. Most of the biosynthetic enzymes likely have broad substrate specificity, and thus, there might be a metabolic grid from a precursor to phomopsin A. The enzyme(s) responsible for the biosynthesis of 3,4-dehydrovaline (dVal) have also not been identified yet. Finally, phomM acts as an S-adenosylmethionine-dependent alpha-N-methyltransferase that catalyzes two successive N-methylation reactions, converting N-desmethyl-phomopsin A to phomopsin A and phomopsin A further to an N,N-dimethylated congener called phomopsin E. The chain is Peptidase S41 family protein phomP1 from Diaporthe leptostromiformis (Lupinosis disease fungus).